The chain runs to 475 residues: Probable proline--tRNA ligase, mitochondrial (475 aa).

A mitochondrion-targeting transit peptide spans 1–29 (MEGLLTRCRTLSALATCSLRHSRCIVRKC).

This sequence belongs to the class-II aminoacyl-tRNA synthetase family.

The protein localises to the mitochondrion matrix. The enzyme catalyses tRNA(Pro) + L-proline + ATP = L-prolyl-tRNA(Pro) + AMP + diphosphate. Functionally, mitochondrial aminoacyl-tRNA synthetase that catalyzes the specific attachment of the proline amino acid (aa) to the homologous transfer RNA (tRNA), further participating in protein synthesis. The reaction occurs in a two steps: proline is first activated by ATP to form Pro-AMP and then transferred to the acceptor end of tRNA(Pro). The polypeptide is Probable proline--tRNA ligase, mitochondrial (Pars2) (Rattus norvegicus (Rat)).